The sequence spans 203 residues: Cutinase pbc1 (203 aa).

The first 18 residues, 1–18 (MKVTALGNTLTGFGQALA), serve as a signal peptide directing secretion. A disulfide bridge connects residues Cys-32 and Cys-107. Residue Ser-118 is the Nucleophile of the active site. Cys-166 and Cys-173 form a disulfide bridge. Residue His-170 is part of the active site. The Proton donor/acceptor role is filled by His-183.

This sequence belongs to the cutinase family. In terms of processing, the 2 disulfide bonds play a critical role in holding the catalytic residues in juxta-position; reduction of the disulfide bridges results in the complete inactivation of the enzyme.

It is found in the secreted. The enzyme catalyses cutin + H2O = cutin monomers.. Its function is as follows. Catalyzes the hydrolysis of complex carboxylic polyesters found in the cell wall of plants. Degrades cutin, a macromolecule that forms the structure of the plant cuticle. Allows pathogenic fungi to penetrate through the cuticular barrier into the host plant during the initial stage of fungal infection. The sequence is that of Cutinase pbc1 from Pyrenopeziza brassicae.